Consider the following 1146-residue polypeptide: Killer toxin subunits alpha/beta (1146 aa).

The first 17 residues, Met1–Leu17, serve as a signal peptide directing secretion. Residues Glu18–Arg29 constitute a propeptide that is removed on maturation. LysM domains follow at residues Ala205–Cys234 and Lys254–Val303. The Chitin-binding type-1 domain occupies Ile316 to Tyr372. 4 disulfides stabilise this stretch: Cys319-Cys338, Cys332-Cys344, Cys337-Cys351, and Cys366-Cys370. The region spanning Phe383–Glu735 is the GH18 domain. Residues Ile424 and Gly447–Asp450 each bind chitin. The Proton donor role is filled by Glu495. Residues Tyr496, Met562–Asp565, and Trp707 each bind chitin. Residues Asn771, Asn858, Asn868, Asn876, and Asn1117 are each glycosylated (N-linked (GlcNAc...) asparagine).

Belongs to the glycosyl hydrolase 18 family. As to quaternary structure, the killer toxin is composed of three subunits: alpha, beta and gamma. In terms of processing, RF2 is potentially split by membrane-bound basic amino acid-specific peptidase to yield the alpha and beta subunits.

It carries out the reaction Random endo-hydrolysis of N-acetyl-beta-D-glucosaminide (1-&gt;4)-beta-linkages in chitin and chitodextrins.. Its function is as follows. The alpha subunit is a potent exochitinase. Along with the beta subunit it plays a role in the initial interaction of the toxin with sensitive cells and allow the gamma subunit (the active toxin) to gain entry into the cell. This Kluyveromyces lactis (strain ATCC 8585 / CBS 2359 / DSM 70799 / NBRC 1267 / NRRL Y-1140 / WM37) (Yeast) protein is Killer toxin subunits alpha/beta.